Consider the following 499-residue polypeptide: MANAISVGVAVQLVLTVLLASIPLRVIWNLFFHPLSYIPGPRLWIAFPIFRQIASIRGVFDAQMCEYHRKYGNAVRFSPNEVSFITEQAWRDIYDHRPNQLERFILSTTRRPDIFDANEIDHARYRKAMLPAFSPKGLQEQEPIVRGYIDTFIERLREVSATGESTDMVKWYNFTTFDIIGDLAFGESFGGLRNREYHFTISFTFEAFKLLSYLEAGAAYPLLLKILMAFTPQSLIEARDKKEEHAETTVRKRLDNRALHGRGDFMDYLLRNRGEKQGLNDKELVANASTLITAGSETTATILSGITYWLLQTPNVLQKVTEEVRSAFQSEADITFTSATSQLPYMLACFQEAFRHYPPVPTGMPRVTPSHGITKISGYDISPNTKVSVHQLAAYSHPDNFHRPREFVPERWLPDAKTNPSSPWYNDRRETVQPFNVGPRNCVGRNLAEQEIRVMLARVLWNFDLELAPESKNWTDQKTHFLWEKGALMCKLHDRFASK.

Residues 7 to 29 (VGVAVQLVLTVLLASIPLRVIWN) form a helical membrane-spanning segment. N-linked (GlcNAc...) asparagine glycosylation is found at Asn-173 and Asn-287. Cys-442 lines the heme pocket. Residue Asn-473 is glycosylated (N-linked (GlcNAc...) asparagine).

The protein belongs to the cytochrome P450 family. The cofactor is heme.

The protein resides in the membrane. The protein operates within sesquiterpene biosynthesis; trichothecene biosynthesis. Its function is as follows. Trichothecene C-4 hydroxylase; part of the gene cluster that mediates the production of the antimicrobial trichothecene harzianum A (HA) that plays a role in Botrytis cinerea antagonistic activity and plant defense priming. The biosynthesis of harzianum A begins with the cyclization of farnesyl diphosphate to trichodiene and is catalyzed by the trichodiene synthase TRI5. Trichodiene undergoes a series of oxygenations catalyzed by the cytochrome P450 monooxygenase TRI4. TRI4 controls the addition of 3 oxygens at C-2, C-11, and the C-12, C-13-epoxide to form the intermediate isotrichodiol. Isotrichodiol then undergoes a non-enzymatic isomerization and cyclization to form 12,13-epoxytrichothec-9-ene (EPT) which is further converted to trichodermol by the cytochrome P450 monooxygenase TRI11 via C-4 hydroxylation. The last step of HA synthesis is esterification of an octatriendioyl moiety to the C-4 oxygen of trichodermol. The octatriendioyl moiety is probably produced by the polyketide synthase TRI17 and the esterification performed by the trichothecene O-acetyltransferase TRI3. This Trichoderma arundinaceum protein is Trichothecene C-4 hydroxylase.